The primary structure comprises 81 residues: Photosystem I iron-sulfur center (81 aa).

2 consecutive 4Fe-4S ferredoxin-type domains span residues 1-31 (MSHS…MVPW) and 39-68 (IASS…IRVY). Cys-11, Cys-14, Cys-17, Cys-21, Cys-48, Cys-51, Cys-54, and Cys-58 together coordinate [4Fe-4S] cluster.

The cyanobacterial PSI reaction center is composed of one copy each of PsaA,B,C,D,E,F,I,J,K,L,M and X, and forms trimeric complexes. Requires [4Fe-4S] cluster as cofactor.

Its subcellular location is the cellular thylakoid membrane. The catalysed reaction is reduced [plastocyanin] + hnu + oxidized [2Fe-2S]-[ferredoxin] = oxidized [plastocyanin] + reduced [2Fe-2S]-[ferredoxin]. Functionally, apoprotein for the two 4Fe-4S centers FA and FB of photosystem I (PSI); essential for photochemical activity. FB is the terminal electron acceptor of PSI, donating electrons to ferredoxin. The C-terminus interacts with PsaA/B/D and helps assemble the protein into the PSI complex. Required for binding of PsaD and PsaE to PSI. PSI is a plastocyanin/cytochrome c6-ferredoxin oxidoreductase, converting photonic excitation into a charge separation, which transfers an electron from the donor P700 chlorophyll pair to the spectroscopically characterized acceptors A0, A1, FX, FA and FB in turn. This chain is Photosystem I iron-sulfur center, found in Microcystis aeruginosa (strain NIES-843 / IAM M-2473).